The following is a 245-amino-acid chain: Uridylate kinase (245 aa).

18-21 (KLSG) contributes to the ATP binding site. Residue glycine 60 participates in UMP binding. ATP is bound by residues glycine 61 and arginine 65. UMP contacts are provided by residues aspartate 80 and 141 to 148 (TGNPFFTT). Residues threonine 168, tyrosine 174, and aspartate 177 each coordinate ATP.

The protein belongs to the UMP kinase family. As to quaternary structure, homohexamer.

The protein localises to the cytoplasm. The catalysed reaction is UMP + ATP = UDP + ADP. The protein operates within pyrimidine metabolism; CTP biosynthesis via de novo pathway; UDP from UMP (UMPK route): step 1/1. Its activity is regulated as follows. Inhibited by UTP. Its function is as follows. Catalyzes the reversible phosphorylation of UMP to UDP. In Pseudomonas paraeruginosa (strain DSM 24068 / PA7) (Pseudomonas aeruginosa (strain PA7)), this protein is Uridylate kinase.